A 683-amino-acid chain; its full sequence is Synaptic vesicle glycoprotein 2B (683 aa).

Residues 1–10 (MDDYRYRDNY) show a composition bias toward basic and acidic residues. Residues 1–72 (MDDYRYRDNY…QTKMAPSRAD (72 aa)) are disordered. Residues 1–110 (MDDYRYRDNY…ECGHGRFQWT (110 aa)) are Cytoplasmic-facing. Residue Ser-33 is modified to Phosphoserine. The residue at position 36 (Thr-36) is a Phosphothreonine. The helical transmembrane segment at 111–131 (LFFVLVLALMADGVEVFVVSF) threads the bilayer. The Extracellular segment spans residues 132-148 (ALPSAEKDMCLSSSKKG). Residues 149-169 (MLGLIVYLGMMAGAFILGGLA) form a helical membrane-spanning segment. Over 170 to 182 (DKLGRKKVLSMSL) the chain is Cytoplasmic. Residues 183-203 (AINASFASLSSFVQGYGAFLF) form a helical membrane-spanning segment. The Extracellular portion of the chain corresponds to 204 to 205 (CR). Residues 206–226 (LISGIGIGGSLPIVFAYFSEF) traverse the membrane as a helical segment. The Cytoplasmic segment spans residues 227–237 (LSREKRGEHLS). The chain crosses the membrane as a helical span at residues 238 to 258 (WLGIFWMTGGIYASAMAWSII). Residues 259–277 (PHYGWGFSMGTNYHFHSWR) are Extracellular-facing. The chain crosses the membrane as a helical span at residues 278–298 (VFVIVCALPATVSMVALKFMP). The Cytoplasmic portion of the chain corresponds to 299–390 (ESPRFLLEMG…CVMGPYRMNT (92 aa)). The chain crosses the membrane as a helical span at residues 391 to 411 (LILAVVWFTMALSYYGLTVWF). Over 412 to 535 (PDMIRYFQDE…CHMDFEEDND (124 aa)) the chain is Extracellular. Phosphotyrosine is present on Tyr-423. Residues Asn-441, Asn-491, and Asn-516 are each glycosylated (N-linked (GlcNAc...) asparagine). Residues 536 to 556 (FLIYLVSFLGSLSVLPGNIIS) traverse the membrane as a helical segment. Residues 557–565 (ALLMDRIGR) are Cytoplasmic-facing. Residues 566–586 (LKMIGGSMLISAVCCFFLFFG) form a helical membrane-spanning segment. The Extracellular portion of the chain corresponds to 587–592 (NSESAM). The chain crosses the membrane as a helical span at residues 593 to 613 (IGWQCLFCGTSIAAWNALDVI). The Cytoplasmic portion of the chain corresponds to 614 to 626 (TVELYPTNQRATA). Residues 627 to 649 (FGILNGLCKLGAILGNTIFASFV) traverse the membrane as a helical segment. Topologically, residues 650–653 (GITK) are extracellular. A helical membrane pass occupies residues 654 to 672 (VVPILLAAASLVGGGLVAL). Over 673–683 (RLPETREQVLM) the chain is Cytoplasmic.

It belongs to the major facilitator superfamily. Interacts with SYT1 in a calcium-independent manner. Forms a complex with SYT1, syntaxin-1 and SNAP25. As to quaternary structure, (Microbial infection) Interacts with C.botulinum neurotoxin type A1 and type A2 (BoNT/A, botA). Interaction is improved by glycosylation of SV2. In terms of assembly, (Microbial infection) Interacts with C.botulinum neurotoxin type D (BoNT/D, botD). (Microbial infection) Interacts with C.botulinum neurotoxin type E (BoNT/E). Interaction requires glycosylation of SV2 proteins. As to quaternary structure, (Microbial infection) Interacts with C.botulinum neurotoxin type F (BoNT/F). Interaction requires glycosylation of SV2 proteins. N-glycosylated. In terms of processing, the N-terminal cytoplasmic domain is phosphorylated by CK1. In terms of tissue distribution, widely expressed throughout the brain. Specifically expressed by pinealocytes in the pineal gland. Also detected in testis (at protein level). Specifically expressed in neural tissues. Expressed in the spinal cord and in all brain regions with a stronger expression in hippocampus and cortex.

Its subcellular location is the cytoplasmic vesicle. The protein resides in the secretory vesicle. It localises to the synaptic vesicle membrane. The protein localises to the acrosome. In terms of biological role, probably plays a role in the control of regulated secretion in neural and endocrine cells. (Microbial infection) Receptor for C.botulinum neurotoxin type A (BoNT/A, botA); the toxin binds via extracellular loop 4. Restores uptake of BoNT/A in mouse and rat cells that are deleted for SV2 receptor. Glycosylation of SV2B is not essential for receptor activity, but enhances the interaction. Also serves as a receptor for the closely related C.botulinum neurotoxin type A2; glycosylation is not essential but enhances the interaction. Functionally, (Microbial infection) Possible receptor for C.botulinum neurotoxin type D (BoNT/D, botD); BoNT/D does not bind to extracellular loop 4 as do BoNT/A and BoNT/E. Another group does not find a convincing interaction with SV2. Its function is as follows. (Microbial infection) Receptor for C.botulinum neurotoxin type E (BoNT/E); the toxin probably binds via extracellular loop 4. Restores uptake of BoNT/E in mouse cells that are deleted for SV2 receptor. Glycosylation of SV2B is not essential for receptor activity, but enhances the interaction. In terms of biological role, (Microbial infection) Receptor for C.botulinum neurotoxin type F (BoNT/F); binding requires glycosylation of this protein. The sequence is that of Synaptic vesicle glycoprotein 2B (Sv2b) from Rattus norvegicus (Rat).